The following is a 505-amino-acid chain: Cysteine--tRNA ligase (505 aa).

Position 33 (cysteine 33) interacts with Zn(2+). A 'HIGH' region motif is present at residues 35 to 45 (PTVYDFAHIGN). 3 residues coordinate Zn(2+): cysteine 229, histidine 268, and glutamate 272. The short motif at 301 to 305 (KMSKS) is the 'KMSKS' region element. Lysine 304 provides a ligand contact to ATP.

The protein belongs to the class-I aminoacyl-tRNA synthetase family. In terms of assembly, monomer. The cofactor is Zn(2+).

It localises to the cytoplasm. The enzyme catalyses tRNA(Cys) + L-cysteine + ATP = L-cysteinyl-tRNA(Cys) + AMP + diphosphate. This is Cysteine--tRNA ligase from Brucella anthropi (strain ATCC 49188 / DSM 6882 / CCUG 24695 / JCM 21032 / LMG 3331 / NBRC 15819 / NCTC 12168 / Alc 37) (Ochrobactrum anthropi).